Here is a 175-residue protein sequence, read N- to C-terminus: Tumor necrosis factor receptor superfamily member 13C (175 aa).

Residues 1–71 lie on the Extracellular side of the membrane; sequence MGARRLRVRS…EGSALRPDVA (71 aa). The TNFR-Cys; truncated repeat unit spans residues 21 to 38; sequence QCNQTECFDPLVRNCVSC. 2 disulfide bridges follow: cysteine 22–cysteine 35 and cysteine 27–cysteine 38. Asparagine 23 carries an N-linked (GlcNAc...) asparagine glycan. The interval 29 to 34 is essential for TNFSF13B/TALL1/BAFF/BLyS binding; the sequence is DPLVRN. Residues 72–92 form a helical; Signal-anchor for type III membrane protein membrane-spanning segment; it reads LLVGAPALLGLILALTLVGLV. Residues 93–175 lie on the Cytoplasmic side of the membrane; the sequence is SLVSWRWRQQ…VTTKTAGPEQ (83 aa). The segment at 124–175 is disordered; sequence VPSSETPHASAPTWPPLKEDADSALPRHSVPVPATELGSTELVTTKTAGPEQ. Positions 160–175 are enriched in polar residues; sequence LGSTELVTTKTAGPEQ.

As to expression, highly expressed in spleen and testis; detected at lower levels in lung and thymus.

It localises to the membrane. In terms of biological role, B-cell receptor specific for TNFSF13B/TALL1/BAFF/BLyS. Promotes the survival of mature B-cells and the B-cell response. The sequence is that of Tumor necrosis factor receptor superfamily member 13C (Tnfrsf13c) from Mus musculus (Mouse).